We begin with the raw amino-acid sequence, 136 residues long: uncharacterized protein (136 aa).

A helical membrane pass occupies residues 19-39; it reads LGFPLGTALLLIIIFSLSGIF. Disordered stretches follow at residues 54–87 and 112–136; these read SLAN…LSVP and KLTV…VPLY.

It is found in the membrane. This is an uncharacterized protein from Arabidopsis thaliana (Mouse-ear cress).